The chain runs to 491 residues: MKAFIWTLSVLFFLLMGIGHGRGRQFKIKKITQRRYPRATDGKEDAKKCSYTFLVPEQKITGPICVNTKGQDAGTIKDMITRMDLENLKDVLSKQKREIDVLQLVVDVDGNIVNEVKLLRKESRNMNSRVTQLYMQLLHEIIRKRDNSLELSQLENKILNVTTEMLKMATRYRELEVKYASLTDLVNNQSVMITLLEEQCLRIFSRQDPHVSPPLVQVVPQHIPNSHQYTPGLLGGNEIQRDPGYPRDLMPPPDLVTSPTKSPLKIPPVTFINEGPYKDCQHAKDAGHSVSGIYMIKPENSNGPMQLWCENSLDPGGWTVIQKRTDGSVNFFRNWENYKKGFGNIDGEYWLGLENIYLLSNQDNYKLLIELEDWSDKKVYAEYSSFRLEPESEFYRLRLGTYQGNAGDSMMWHNGKQFTTLDRDKDMYAGNCAHFHKGGWWYNACAHSNLNGVWYRGGHYRSKYQDGIFWAEYRGGSYSLRAVQMLIKPID.

Residues 1-23 form the signal peptide; the sequence is MKAFIWTLSVLFFLLMGIGHGRG. Positions 80–168 form a coiled coil; sequence ITRMDLENLK…LNVTTEMLKM (89 aa). N-linked (GlcNAc...) asparagine glycosylation is found at Asn-160 and Asn-188. The Fibrinogen C-terminal domain maps to 271–491; the sequence is FINEGPYKDC…AVQMLIKPID (221 aa). Disulfide bonds link Cys-280-Cys-309 and Cys-432-Cys-445.

It localises to the secreted. This Bos taurus (Bovine) protein is Angiopoietin-related protein 1 (ANGPTL1).